Here is a 380-residue protein sequence, read N- to C-terminus: Alanine racemase (380 aa).

K41 serves as the catalytic Proton acceptor; specific for D-alanine. The residue at position 41 (K41) is an N6-(pyridoxal phosphate)lysine. R141 lines the substrate pocket. Y271 (proton acceptor; specific for L-alanine) is an active-site residue. M318 is a substrate binding site.

This sequence belongs to the alanine racemase family. Pyridoxal 5'-phosphate is required as a cofactor.

It catalyses the reaction L-alanine = D-alanine. Its pathway is amino-acid biosynthesis; D-alanine biosynthesis; D-alanine from L-alanine: step 1/1. In terms of biological role, catalyzes the interconversion of L-alanine and D-alanine. May also act on other amino acids. The chain is Alanine racemase (alr) from Latilactobacillus sakei subsp. sakei (strain 23K) (Lactobacillus sakei subsp. sakei).